Consider the following 259-residue polypeptide: Indole-3-glycerol phosphate synthase (259 aa).

The protein belongs to the TrpC family.

The enzyme catalyses 1-(2-carboxyphenylamino)-1-deoxy-D-ribulose 5-phosphate + H(+) = (1S,2R)-1-C-(indol-3-yl)glycerol 3-phosphate + CO2 + H2O. It functions in the pathway amino-acid biosynthesis; L-tryptophan biosynthesis; L-tryptophan from chorismate: step 4/5. In Dehalococcoides mccartyi (strain ATCC BAA-2266 / KCTC 15142 / 195) (Dehalococcoides ethenogenes (strain 195)), this protein is Indole-3-glycerol phosphate synthase.